The sequence spans 167 residues: 3-dehydroquinate dehydratase (167 aa).

The active-site Proton acceptor is the Tyr22. 3 residues coordinate substrate: Asn76, His82, and Asp89. His102 (proton donor) is an active-site residue. Substrate is bound by residues 103-104 (LT) and Arg113.

This sequence belongs to the type-II 3-dehydroquinase family. Homododecamer.

It carries out the reaction 3-dehydroquinate = 3-dehydroshikimate + H2O. It participates in metabolic intermediate biosynthesis; chorismate biosynthesis; chorismate from D-erythrose 4-phosphate and phosphoenolpyruvate: step 3/7. In terms of biological role, catalyzes a trans-dehydration via an enolate intermediate. The sequence is that of 3-dehydroquinate dehydratase from Helicobacter pylori (strain Shi470).